The primary structure comprises 98 residues: Ribonuclease kappa (98 aa).

2 helical membrane passes run A13–F33 and V65–C85.

It belongs to the RNase K family. Interacts with the proton translocation complex V0 of the V-ATPase. Interacts with ATP6AP1. In terms of tissue distribution, expressed in brain (at protein level).

The protein resides in the endomembrane system. The protein localises to the cytoplasmic vesicle. Its subcellular location is the clathrin-coated vesicle membrane. Its function is as follows. Endoribonuclease which preferentially cleaves ApU and ApG phosphodiester bonds. Hydrolyzes UpU bonds at a lower rate. Regulates the activity of vacuolar (H+)-ATPase (V-ATPase) which is responsible for acidifying and maintaining the pH of intracellular compartments. Required at an early stage of receptor-mediated endocytosis. This chain is Ribonuclease kappa (RNASEK), found in Bos taurus (Bovine).